The sequence spans 354 residues: Inositol-tetrakisphosphate 1-kinase 1 (354 aa).

Residues 1–16 are compositionally biased toward basic and acidic residues; it reads MRVHEEASEDKEREVE. Positions 1-24 are disordered; sequence MRVHEEASEDKEREVEEAPDLMPL. The 1D-myo-inositol 1,3,4-trisphosphate site is built by lysine 53 and lysine 95. Arginine 130 and lysine 180 together coordinate ATP. Residues 140 to 347 form the ATP-grasp domain; it reads LNLSNAYGEV…FLLSLVQNKY (208 aa). Residues histidine 191 and lysine 223 each contribute to the 1D-myo-inositol 1,3,4-trisphosphate site. Residues 212-223 and serine 238 contribute to the ATP site; that span reads QEFVNHGGILFK. Residues aspartate 303, aspartate 318, and asparagine 320 each coordinate Mg(2+). Asparagine 320 serves as a coordination point for 1D-myo-inositol 1,3,4-trisphosphate.

The protein belongs to the ITPK1 family. As to quaternary structure, monomer. It depends on Mg(2+) as a cofactor. In terms of tissue distribution, expressed in roots, leaves, flowers, anthers and embryos.

The catalysed reaction is 1D-myo-inositol 3,4,5,6-tetrakisphosphate + ATP = 1D-myo-inositol 1,3,4,5,6-pentakisphosphate + ADP + H(+). It catalyses the reaction 1D-myo-inositol 1,3,4-trisphosphate + ATP = 1D-myo-inositol 1,3,4,5-tetrakisphosphate + ADP + H(+). It carries out the reaction 1D-myo-inositol 1,3,4-trisphosphate + ATP = 1D-myo-inositol 1,3,4,6-tetrakisphosphate + ADP + H(+). Its function is as follows. Kinase that can phosphorylate various inositol polyphosphate such as Ins(3,4,5,6)P4 or Ins(1,3,4)P3 and participates in phytic acid biosynthesis in developing seeds. Phytic acid is the primary storage form of phosphorus in cereal grains and other plant seeds. The polypeptide is Inositol-tetrakisphosphate 1-kinase 1 (Oryza sativa subsp. japonica (Rice)).